Here is a 385-residue protein sequence, read N- to C-terminus: Guanine nucleotide-binding protein alpha-5 subunit (385 aa).

Glycine 2 is lipidated: N-myristoyl glycine. Cysteine 6 carries S-palmitoyl cysteine lipidation. One can recognise a G-alpha domain in the interval 32 to 385; the sequence is RKIKMLLLGV…GKNYEDTNLE (354 aa). Positions 35-48 are G1 motif; sequence KMLLLGVTDSGKST. Residues 40-47, 174-180, 199-203, 298-301, and alanine 357 each bind GTP; these read GVTDSGKS, IHMRQTT, DVGGQ, and NKKD. Residues serine 47 and threonine 180 each coordinate Mg(2+). Residues 172–180 are G2 motif; it reads DLIHMRQTT. The G3 motif stretch occupies residues 195-204; it reads IRLIDVGGQK. Residues 294 to 301 are G4 motif; it reads MLFLNKKD. The segment at 355–360 is G5 motif; sequence TQATVT.

Belongs to the G-alpha family. As to quaternary structure, g proteins are composed of 3 units; alpha, beta and gamma. The alpha chain contains the guanine nucleotide binding site.

In terms of biological role, guanine nucleotide-binding proteins (G proteins) are involved as modulators or transducers in various transmembrane signaling systems. In Caenorhabditis elegans, this protein is Guanine nucleotide-binding protein alpha-5 subunit (gpa-5).